Reading from the N-terminus, the 231-residue chain is MAHVSSRKRSRSRSRSRGRRGSEKRSKRSSKDSSRNCSTSKSQGHKASSTSGVEERSKHKAQRTSRSSSSSSSSSSSSSSSSTSSSSSSDGRKKRGKHKDKKKRKKKKKRKKKMKRKGKEKAVVVHQAEALPGPSLDQWHRSAGEDNDGPVLTDEQKSRIQAMKPMTKEEWDARQSVIRKVVDPETGRTRLIKGDGEVLEEIVTKERHREINKQATRGDGLAFQMRAGLLP.

Over residues 1–19 the composition is skewed to basic residues; the sequence is MAHVSSRKRSRSRSRSRGR. The segment at 1 to 154 is disordered; that stretch reads MAHVSSRKRS…EDNDGPVLTD (154 aa). Over residues 20–34 the composition is skewed to basic and acidic residues; that stretch reads RGSEKRSKRSSKDSS. Residues 64 to 89 are compositionally biased toward low complexity; sequence TSRSSSSSSSSSSSSSSSSTSSSSSS. Basic residues predominate over residues 92 to 119; the sequence is RKKRGKHKDKKKRKKKKKRKKKMKRKGK. Residues serine 142 and serine 176 each carry the phosphoserine modification. Lysine 193 participates in a covalent cross-link: Glycyl lysine isopeptide (Lys-Gly) (interchain with G-Cter in SUMO2).

This sequence belongs to the ARL6IP4 family. Interacts with ARL6. Interacts with ZCCHC17. Interacts with SRSF2.

It is found in the nucleus. The protein localises to the nucleolus. It localises to the nucleus speckle. Involved in modulating alternative pre-mRNA splicing with either 5' distal site activation or preferential use of 3' proximal site. The protein is ADP-ribosylation factor-like protein 6-interacting protein 4 (Arl6ip4) of Rattus norvegicus (Rat).